The following is a 468-amino-acid chain: Probable Xaa-Pro aminopeptidase PEPP (468 aa).

Positions 264, 275, 398, and 438 each coordinate Mn(2+).

Belongs to the peptidase M24B family. Requires Mn(2+) as cofactor.

It catalyses the reaction Release of any N-terminal amino acid, including proline, that is linked to proline, even from a dipeptide or tripeptide.. In terms of biological role, catalyzes the removal of a penultimate prolyl residue from the N-termini of peptides. The sequence is that of Probable Xaa-Pro aminopeptidase PEPP (PEPP) from Paracoccidioides lutzii (strain ATCC MYA-826 / Pb01) (Paracoccidioides brasiliensis).